A 110-amino-acid chain; its full sequence is Flagellar hook-basal body complex protein FliE (110 aa).

This sequence belongs to the FliE family.

It is found in the bacterial flagellum basal body. This chain is Flagellar hook-basal body complex protein FliE, found in Pseudomonas putida (strain GB-1).